The chain runs to 496 residues: Probable 26S proteasome non-ATPase regulatory subunit 3 (496 aa).

One can recognise a PCI domain in the interval 249–428 (ARFLYYLGRI…GYMRSKESTD (180 aa)). Residues 458–480 (RYPPKSYGKELESAEERREREQQ) are disordered. Residues 464–480 (YGKELESAEERREREQQ) show a composition bias toward basic and acidic residues.

The protein belongs to the proteasome subunit S3 family. In terms of assembly, the 26S proteasome is composed of a core protease, known as the 20S proteasome, capped at one or both ends by the 19S regulatory complex (RC). The RC is composed of at least 18 different subunits in two subcomplexes, the base and the lid, which form the portions proximal and distal to the 20S proteolytic core, respectively.

In terms of biological role, acts as a regulatory subunit of the 26 proteasome which is involved in the ATP-dependent degradation of ubiquitinated proteins. The sequence is that of Probable 26S proteasome non-ATPase regulatory subunit 3 (Dox-A2) from Anopheles gambiae (African malaria mosquito).